Here is a 320-residue protein sequence, read N- to C-terminus: MSYCSGVAISADEGITMRNGRAKALQEHSPDQVATPLLPQVPPQEQQDLNPQQQQQQQQQQQATPQKQAMSADEKKATKKSLVIVAGIFVASLVTMCYVYAIFPELNASEKQHLKIPRDIQDAKMLAKVLDRYKDMYYFEVMFGVVVAYVFLQTFAIPGSLFLSILLGFLYKFPIALFLICFCSALGATLCYTLSNLVGRRLIRHFWPKKTSEWSKHVEEYRDSLFNYMLFLRMTPILPNWFINLASPVIGVPLHIFALGTFCGVAPPSVIAIQAGKTLQKMTSSSEAFSWTSMGILMACACASLLPGLLKNKFKHKKEA.

The tract at residues 20–72 is disordered; sequence GRAKALQEHSPDQVATPLLPQVPPQEQQDLNPQQQQQQQQQQQATPQKQAMSA. Residues 43–68 show a composition bias toward low complexity; the sequence is PQEQQDLNPQQQQQQQQQQQATPQKQ. A run of 6 helical transmembrane segments spans residues 83–103, 141–161, 173–195, 225–242, 245–265, and 289–309; these read VIVA…YAIF, VMFG…PGSL, FPIA…YTLS, LFNY…PNWF, LASP…FCGV, and FSWT…LPGL.

This sequence belongs to the TMEM41 family. In embryos, strongly expressed in the nervous system.

The protein resides in the membrane. Its function is as follows. Required in cholinergic neurons, but not in motor neurons, for normal neurotransmitter release by motor neurons. Involved in muscle growth. In Drosophila melanogaster (Fruit fly), this protein is Transmembrane protein 41 homolog (stas).